A 273-amino-acid polypeptide reads, in one-letter code: Dermonecrotic toxin LarSicTox-alphaIB1aii (273 aa).

Histidine 5 is a catalytic residue. 2 residues coordinate Mg(2+): glutamate 25 and aspartate 27. The Nucleophile role is filled by histidine 41. Disulfide bonds link cysteine 45–cysteine 51 and cysteine 47–cysteine 190. Position 85 (aspartate 85) interacts with Mg(2+). A glycan (N-linked (GlcNAc...) asparagine) is linked at asparagine 250.

Belongs to the arthropod phospholipase D family. Class II subfamily. Requires Mg(2+) as cofactor. In terms of tissue distribution, expressed by the venom gland.

Its subcellular location is the secreted. It catalyses the reaction an N-(acyl)-sphingosylphosphocholine = an N-(acyl)-sphingosyl-1,3-cyclic phosphate + choline. It carries out the reaction an N-(acyl)-sphingosylphosphoethanolamine = an N-(acyl)-sphingosyl-1,3-cyclic phosphate + ethanolamine. The enzyme catalyses a 1-acyl-sn-glycero-3-phosphocholine = a 1-acyl-sn-glycero-2,3-cyclic phosphate + choline. The catalysed reaction is a 1-acyl-sn-glycero-3-phosphoethanolamine = a 1-acyl-sn-glycero-2,3-cyclic phosphate + ethanolamine. Dermonecrotic toxins cleave the phosphodiester linkage between the phosphate and headgroup of certain phospholipids (sphingolipid and lysolipid substrates), forming an alcohol (often choline) and a cyclic phosphate. This toxin acts on sphingomyelin (SM). It may also act on ceramide phosphoethanolamine (CPE), lysophosphatidylcholine (LPC) and lysophosphatidylethanolamine (LPE), but not on lysophosphatidylserine (LPS), and lysophosphatidylglycerol (LPG). It acts by transphosphatidylation, releasing exclusively cyclic phosphate products as second products. Induces dermonecrosis, hemolysis, increased vascular permeability, edema, inflammatory response, and platelet aggregation. In Loxosceles arizonica (Arizona brown spider), this protein is Dermonecrotic toxin LarSicTox-alphaIB1aii.